Here is a 1051-residue protein sequence, read N- to C-terminus: Serine/threonine-protein kinase ULK1 (1051 aa).

In terms of domain architecture, Protein kinase spans 16–278 (FSRKDLIGHG…FDEFFHHPFL (263 aa)). Residues 22 to 30 (IGHGAFAVV) and lysine 46 each bind ATP. Aspartate 138 serves as the catalytic Proton acceptor. At lysine 162 the chain carries N6-acetyllysine. Disordered stretches follow at residues 283-323 (PIKK…EMPQ), 335-358 (AGFL…DDFV), and 394-554 (GLES…CRLH). Residues 287-416 (SPPVPVPSYP…TCSSSPSPSG (130 aa)) form an interaction with GABARAP and GABARAPL2 region. 3 stretches are compositionally biased toward low complexity: residues 295–318 (YPSS…PPSL), 340–349 (GSRDSGGSSK), and 400–423 (RTPS…PFSS). At serine 317 the chain carries Phosphoserine; by AMPK. Residues serine 403 and serine 450 each carry the phosphoserine modification. A compositionally biased stretch (polar residues) spans 437–459 (QVHNYQRIEQNLQSPTQQQTARS). Threonine 456 bears the Phosphothreonine mark. 4 positions are modified to phosphoserine: serine 467, serine 477, serine 479, and serine 521. Serine 555 bears the Phosphoserine; by AMPK mark. Threonine 574 carries the post-translational modification Phosphothreonine. Lysine 606 is subject to N6-acetyllysine. Threonine 635 carries the post-translational modification Phosphothreonine. A Phosphoserine; by AMPK modification is found at serine 637. Serine 638 bears the Phosphoserine mark. 2 disordered regions span residues 661-686 (PDLS…DTRG) and 727-787 (APSA…TGSS). Residues 731–745 (GFGGTLHPGARGGGA) show a composition bias toward gly residues. Serine 757 carries the post-translational modification Phosphoserine; by MTOR. A Phosphoserine modification is found at serine 774. The span at 774–787 (SVGSSSSLGSTGSS) shows a compositional bias: low complexity. Serine 777 is modified (phosphoserine; by AMPK). Residues 829–1051 (PDLPEETLME…LSALLSGVYA (223 aa)) are C-terminal domain; mediates interaction with SESN2.

This sequence belongs to the protein kinase superfamily. Ser/Thr protein kinase family. APG1/unc-51/ULK1 subfamily. In terms of assembly, interacts with GABARAP and GABARAPL2. Interacts (via C-terminus) with ATG13. Part of a complex consisting of ATG13, ATG101, ULK1 and RB1CC1. Associates with the mammalian target of rapamycin complex 1 (mTORC1) through an interaction with RPTOR; the association depends on nutrient conditions and is reduced during starvation. Interacts with FEZ1; SCOC interferes with FEZ1-binding. Interacts with TBC1D14. Interacts (phosphorylated form) with TRIM5. When phosphorylated at Ser-317, interacts with MEFV and BECN1 simultaneously. Interacts with TRIM21 and IRF3, in the presence of TRIM21. Interacts with SESN2. Interacts with SQSTM1. Interacts with C9orf72. Interacts with WDR45. Interacts with ATG13; this interaction is increased in the absence of TMEM39A. Interacts with WIPI2. Interacts with ATP2A2. Interacts with AMBRA1. Interacts with Irgm1; promoting the coassembly of ULK1 and BECN1. Post-translationally, autophosphorylated. Phosphorylated under nutrient-rich conditions; dephosphorylated during starvation or following treatment with rapamycin. In response to nutrient limitation, phosphorylated and activated by AMPK, leading to activate autophagy. Under nutrient sufficiency, phosphorylated by MTOR/mTOR, disrupting the interaction with AMPK and preventing activation of ULK1. In terms of processing, ubiquitinated via 'Lys-63'-linkage by a complex composed of AMBRA1 and TRAF6 following autophagy induction, promoting ULK1 stability and kinase activity. Deubiquitinated by USP20; leading to ULK1 stability and autophagy initiation. Acetylated by KAT5/TIP60 under autophagy induction, promoting protein kinase activity.

Its subcellular location is the cytoplasm. It localises to the cytosol. The protein localises to the preautophagosomal structure. The catalysed reaction is L-seryl-[protein] + ATP = O-phospho-L-seryl-[protein] + ADP + H(+). It catalyses the reaction L-threonyl-[protein] + ATP = O-phospho-L-threonyl-[protein] + ADP + H(+). Acetylation by KAT5/TIP60 stimulates the protein kinase activity. The protein kinase activity is activated by unanchored 'Lys-63'-linked polyubiquitin chains: unanchored 'Lys-63'-linked polyubiquitin chains are catalyzed by TRIM32 in an AMBRA1-dependent manner. In terms of biological role, serine/threonine-protein kinase involved in autophagy in response to starvation. Acts upstream of phosphatidylinositol 3-kinase PIK3C3 to regulate the formation of autophagophores, the precursors of autophagosomes. Part of regulatory feedback loops in autophagy: acts both as a downstream effector and negative regulator of mammalian target of rapamycin complex 1 (mTORC1) via interaction with RPTOR. Activated via phosphorylation by AMPK and also acts as a regulator of AMPK by mediating phosphorylation of AMPK subunits PRKAA1, PRKAB2 and PRKAG1, leading to negatively regulate AMPK activity. May phosphorylate ATG13/KIAA0652 and RPTOR; however such data need additional evidences. Plays a role early in neuronal differentiation and is required for granule cell axon formation. Also phosphorylates SESN2 and SQSTM1 to regulate autophagy. Phosphorylates FLCN, promoting autophagy. Phosphorylates AMBRA1 in response to autophagy induction, releasing AMBRA1 from the cytoskeletal docking site to induce autophagosome nucleation. Phosphorylates ATG4B, leading to inhibit autophagy by decreasing both proteolytic activation and delipidation activities of ATG4B. In Mus musculus (Mouse), this protein is Serine/threonine-protein kinase ULK1 (Ulk1).